We begin with the raw amino-acid sequence, 437 residues long: Enolase (437 aa).

Glutamine 162 is a binding site for (2R)-2-phosphoglycerate. Residue glutamate 204 is the Proton donor of the active site. Mg(2+) contacts are provided by aspartate 251, glutamate 297, and aspartate 324. (2R)-2-phosphoglycerate-binding residues include lysine 349, arginine 378, serine 379, and lysine 400. The active-site Proton acceptor is lysine 349.

The protein belongs to the enolase family. The cofactor is Mg(2+).

It localises to the cytoplasm. The protein resides in the secreted. The protein localises to the cell surface. The enzyme catalyses (2R)-2-phosphoglycerate = phosphoenolpyruvate + H2O. The protein operates within carbohydrate degradation; glycolysis; pyruvate from D-glyceraldehyde 3-phosphate: step 4/5. In terms of biological role, catalyzes the reversible conversion of 2-phosphoglycerate (2-PG) into phosphoenolpyruvate (PEP). It is essential for the degradation of carbohydrates via glycolysis. In Chlorobium luteolum (strain DSM 273 / BCRC 81028 / 2530) (Pelodictyon luteolum), this protein is Enolase.